A 63-amino-acid chain; its full sequence is uncharacterized protein (63 aa).

Residues 1 to 15 (MGRNHIHKNRDKNKQ) are compositionally biased toward basic residues. The disordered stretch occupies residues 1–63 (MGRNHIHKNR…ADNRAKKKSR (63 aa)). Acidic residues predominate over residues 30–44 (GVYEEYSTELADADD). Basic and acidic residues predominate over residues 45 to 57 (REAQERAKAADNR).

This is an uncharacterized protein from Bacillus subtilis (strain 168).